Here is a 180-residue protein sequence, read N- to C-terminus: Adenosine 5'-phosphosulfate reductase (180 aa).

[4Fe-4S] cluster contacts are provided by C57, C58, C140, and C143. C168 acts as the Nucleophile; cysteine thiosulfonate intermediate in catalysis.

Belongs to the PAPS reductase family. CysH subfamily. Requires [4Fe-4S] cluster as cofactor.

It localises to the cytoplasm. It carries out the reaction [thioredoxin]-disulfide + sulfite + AMP + 2 H(+) = adenosine 5'-phosphosulfate + [thioredoxin]-dithiol. It functions in the pathway sulfur metabolism; hydrogen sulfide biosynthesis; sulfite from sulfate. Catalyzes the formation of sulfite from adenosine 5'-phosphosulfate (APS) using thioredoxin as an electron donor. The protein is Adenosine 5'-phosphosulfate reductase of Rhizobium tropici.